The following is a 186-amino-acid chain: GTP cyclohydrolase 1 1 (186 aa).

This sequence belongs to the GTP cyclohydrolase I family. Homomer.

It catalyses the reaction GTP + H2O = 7,8-dihydroneopterin 3'-triphosphate + formate + H(+). Its pathway is cofactor biosynthesis; 7,8-dihydroneopterin triphosphate biosynthesis; 7,8-dihydroneopterin triphosphate from GTP: step 1/1. The chain is GTP cyclohydrolase 1 1 (folE1) from Pseudomonas aeruginosa (strain ATCC 15692 / DSM 22644 / CIP 104116 / JCM 14847 / LMG 12228 / 1C / PRS 101 / PAO1).